The chain runs to 124 residues: Small ribosomal subunit protein uS12 (124 aa).

Residue aspartate 89 is modified to 3-methylthioaspartic acid. Positions 102–124 (LDTSGVNNRKHGRSKYGTKRPKS) are disordered. The span at 109–124 (NRKHGRSKYGTKRPKS) shows a compositional bias: basic residues.

The protein belongs to the universal ribosomal protein uS12 family. As to quaternary structure, part of the 30S ribosomal subunit. Contacts proteins S8 and S17. May interact with IF1 in the 30S initiation complex.

With S4 and S5 plays an important role in translational accuracy. Its function is as follows. Interacts with and stabilizes bases of the 16S rRNA that are involved in tRNA selection in the A site and with the mRNA backbone. Located at the interface of the 30S and 50S subunits, it traverses the body of the 30S subunit contacting proteins on the other side and probably holding the rRNA structure together. The combined cluster of proteins S8, S12 and S17 appears to hold together the shoulder and platform of the 30S subunit. This Francisella philomiragia subsp. philomiragia (strain ATCC 25017 / CCUG 19701 / FSC 153 / O#319-036) protein is Small ribosomal subunit protein uS12.